A 229-amino-acid chain; its full sequence is UPF0228 protein MA_3119 (229 aa).

The span at 35 to 66 (STPVNTSTPVNTSTPVNTSTPVNTSTPVSTST) shows a compositional bias: low complexity. The interval 35–67 (STPVNTSTPVNTSTPVNTSTPVNTSTPVSTSTI) is disordered.

It belongs to the UPF0228 family.

In Methanosarcina acetivorans (strain ATCC 35395 / DSM 2834 / JCM 12185 / C2A), this protein is UPF0228 protein MA_3119.